We begin with the raw amino-acid sequence, 244 residues long: Reticulon-like protein B7 (244 aa).

The Reticulon domain maps to 70 to 244 (PADVLLWRDK…EAKFLSKIPH (175 aa)). 3 consecutive transmembrane segments (helical) span residues 80-100 (KVTLGLLSAVTVIWLLFGFGG), 103-123 (LLTSLCRGSILFLLLSFLWSN), and 172-192 (FVMAVIGLWLVSVIGNWFSFL).

The protein resides in the endoplasmic reticulum membrane. The protein is Reticulon-like protein B7 (RTNLB7) of Arabidopsis thaliana (Mouse-ear cress).